The primary structure comprises 562 residues: Extracellular matrix protein 1 (562 aa).

An N-terminal signal peptide occupies residues 1-19 (MGTIRSSALILACLALASA). Disordered stretches follow at residues 46–87 (GYAA…SSPE) and 119–171 (QKEQ…WNPA). Residues 129–154 (IEQKEIDPPVQHQEEIVQSRQKEEKP) are compositionally biased toward basic and acidic residues. A run of 2 repeats spans residues 172-301 (RHCQ…RPDY) and 305-427 (PCPI…YPNY). The segment at 172–427 (RHCQQGRRGI…FAHLAPYPNY (256 aa)) is 2 X approximate repeats. 3 N-linked (GlcNAc...) asparagine glycosylation sites follow: asparagine 376, asparagine 466, and asparagine 538. Positions 539 to 562 (ATGLGQQGPTGGTNVGPAPGSKEE) are disordered. Residues 543–552 (GQQGPTGGTN) are compositionally biased toward gly residues. Position 559 is a phosphoserine (serine 559).

As to quaternary structure, interacts (via C-terminus) with HSPG2 (via C-terminus). Interacts with EFEMP1/FBLN3 and LAMB3. Interacts with MMP9.

The protein resides in the secreted. The protein localises to the extracellular space. Its subcellular location is the extracellular matrix. Functionally, involved in endochondral bone formation as negative regulator of bone mineralization. Stimulates the proliferation of endothelial cells and promotes angiogenesis. Inhibits MMP9 proteolytic activity. The sequence is that of Extracellular matrix protein 1 (Ecm1) from Rattus norvegicus (Rat).